Here is a 162-residue protein sequence, read N- to C-terminus: Nucleotide-binding protein CMM_2802 (162 aa).

The protein belongs to the YajQ family.

Nucleotide-binding protein. The sequence is that of Nucleotide-binding protein CMM_2802 from Clavibacter michiganensis subsp. michiganensis (strain NCPPB 382).